The sequence spans 340 residues: Phosphate acyltransferase (340 aa).

Belongs to the PlsX family. As to quaternary structure, homodimer. Probably interacts with PlsY.

The protein localises to the cytoplasm. It carries out the reaction a fatty acyl-[ACP] + phosphate = an acyl phosphate + holo-[ACP]. Its pathway is lipid metabolism; phospholipid metabolism. Its function is as follows. Catalyzes the reversible formation of acyl-phosphate (acyl-PO(4)) from acyl-[acyl-carrier-protein] (acyl-ACP). This enzyme utilizes acyl-ACP as fatty acyl donor, but not acyl-CoA. The polypeptide is Phosphate acyltransferase (Nostoc punctiforme (strain ATCC 29133 / PCC 73102)).